A 91-amino-acid polypeptide reads, in one-letter code: HssA/B-like protein 52 (91 aa).

Disordered stretches follow at residues 1-20 and 72-91; these read MTLF…SKSS and GGCG…CCGI.

Belongs to the hssA/B family.

This chain is HssA/B-like protein 52 (hssl52), found in Dictyostelium discoideum (Social amoeba).